Consider the following 1701-residue polypeptide: Coiled-coil domain-containing protein 180 (1701 aa).

Positions 1–35 (MRGGENRPPARVQSSSEELELRHQSLDAFPGRRLP) are disordered. Residues 171 to 198 (QRQAEHKRKSYESALASFQEEIAQVGKE) are a coiled coil. Disordered stretches follow at residues 657–808 (EKPS…DKEE), 1272–1291 (HHCD…CGSR), and 1319–1354 (GFKR…KPNK). Basic residues predominate over residues 661-671 (QKRVKKLRKKQ). The span at 672-682 (GSKEDMTRSEE) shows a compositional bias: basic and acidic residues. Over residues 683-692 (SISSGTSTAR) the composition is skewed to polar residues. Residues 696-705 (EVEEENDQEM) show a composition bias toward acidic residues. Residues 755–766 (ENVKGQGEKKEE) are compositionally biased toward basic and acidic residues. The stretch at 757–804 (VKGQGEKKEESEEEDEKEEEEEEEKLEEEKEEKEAQEEQESLSVGEEE) forms a coiled coil. Over residues 767-808 (SEEEDEKEEEEEEEKLEEEKEEKEAQEEQESLSVGEEEDKEE) the composition is skewed to acidic residues.

The sequence is that of Coiled-coil domain-containing protein 180 (CCDC180) from Homo sapiens (Human).